Consider the following 108-residue polypeptide: Trissin (108 aa).

The signal sequence occupies residues 1 to 29 (MTKTTMHWLAHFQIILLCIWLMCPPSSQA). Disulfide bonds link C32–C43, C35–C52, and C39–C51. A propeptide spanning residues 57-108 (RKRSDPDALRQSSNRRLIDFILLQGRALFTQELRERRHNGTLMDLGLNTYYP) is cleaved from the precursor.

It is found in the secreted. Its function is as follows. Activates the G-protein coupled receptor TrissinR in vitro, leading to increased intracellular calcium ion levels. The polypeptide is Trissin (Drosophila melanogaster (Fruit fly)).